Consider the following 539-residue polypeptide: Chaperonin GroEL (539 aa).

Residues Thr30–Pro33, Lys51, Asp87–Thr91, Gly415, and Asp495 contribute to the ATP site.

The protein belongs to the chaperonin (HSP60) family. In terms of assembly, forms a cylinder of 14 subunits composed of two heptameric rings stacked back-to-back. Interacts with the co-chaperonin GroES.

It localises to the cytoplasm. It carries out the reaction ATP + H2O + a folded polypeptide = ADP + phosphate + an unfolded polypeptide.. Together with its co-chaperonin GroES, plays an essential role in assisting protein folding. The GroEL-GroES system forms a nano-cage that allows encapsulation of the non-native substrate proteins and provides a physical environment optimized to promote and accelerate protein folding. The polypeptide is Chaperonin GroEL (Serratia rubidaea (Serratia marinorubra)).